Reading from the N-terminus, the 175-residue chain is Gamma-crystallin A (175 aa).

2 Beta/gamma crystallin 'Greek key' domains span residues G2–V40 and H41–P83. Residues Q84 to T88 form a connecting peptide region. Beta/gamma crystallin 'Greek key' domains are found at residues F89–E129 and G130–M172.

Belongs to the beta/gamma-crystallin family.

Its function is as follows. Crystallins are the dominant structural components of the vertebrate eye lens. This Bos taurus (Bovine) protein is Gamma-crystallin A (CRYGA).